We begin with the raw amino-acid sequence, 306 residues long: tRNA-cytidine(32) 2-sulfurtransferase (306 aa).

A PP-loop motif motif is present at residues 49–54; that stretch reads SGGKDS. [4Fe-4S] cluster contacts are provided by cysteine 124, cysteine 127, and cysteine 215.

The protein belongs to the TtcA family. In terms of assembly, homodimer. Mg(2+) serves as cofactor. It depends on [4Fe-4S] cluster as a cofactor.

Its subcellular location is the cytoplasm. It carries out the reaction cytidine(32) in tRNA + S-sulfanyl-L-cysteinyl-[cysteine desulfurase] + AH2 + ATP = 2-thiocytidine(32) in tRNA + L-cysteinyl-[cysteine desulfurase] + A + AMP + diphosphate + H(+). The protein operates within tRNA modification. Functionally, catalyzes the ATP-dependent 2-thiolation of cytidine in position 32 of tRNA, to form 2-thiocytidine (s(2)C32). The sulfur atoms are provided by the cysteine/cysteine desulfurase (IscS) system. The chain is tRNA-cytidine(32) 2-sulfurtransferase from Azoarcus sp. (strain BH72).